The sequence spans 97 residues: uncharacterized protein (97 aa).

May have a regulatory function. This is an uncharacterized protein from Synechocystis sp. (strain ATCC 27184 / PCC 6803 / Kazusa).